Here is a 424-residue protein sequence, read N- to C-terminus: Dihydroorotase (424 aa).

Zn(2+) is bound by residues His-58 and His-60. Substrate is bound by residues 60–62 and Asn-92; that span reads HLR. The Zn(2+) site is built by Asp-150, His-177, and His-230. Asn-276 provides a ligand contact to substrate. Asp-303 is a Zn(2+) binding site. Asp-303 is an active-site residue. Substrate is bound by residues His-307 and 321 to 322; that span reads FG.

It belongs to the metallo-dependent hydrolases superfamily. DHOase family. Class I DHOase subfamily. Requires Zn(2+) as cofactor.

It catalyses the reaction (S)-dihydroorotate + H2O = N-carbamoyl-L-aspartate + H(+). It functions in the pathway pyrimidine metabolism; UMP biosynthesis via de novo pathway; (S)-dihydroorotate from bicarbonate: step 3/3. Functionally, catalyzes the reversible cyclization of carbamoyl aspartate to dihydroorotate. The protein is Dihydroorotase of Staphylococcus aureus (strain MRSA252).